The chain runs to 398 residues: Cobalamin import ATP-binding protein BtuD (398 aa).

The region spanning 3 to 237 is the ABC transporter domain; the sequence is LDVTGLDVEL…DTIRAAFDAR (235 aa). 35–42 contacts ATP; that stretch reads GPNGAGKS.

This sequence belongs to the ABC transporter superfamily. The complex is composed of two ATP-binding proteins (BtuD), two transmembrane proteins (BtuC) and a solute-binding protein (BtuF).

It localises to the cell membrane. The catalysed reaction is an R-cob(III)alamin(out) + ATP + H2O = an R-cob(III)alamin(in) + ADP + phosphate + H(+). In terms of biological role, required for corrinoid utilization. Probably part of the ABC transporter complex BtuCDF involved in cobalamin (vitamin B12) import. Probably responsible for energy coupling to the transport system. This Halobacterium salinarum (strain ATCC 29341 / DSM 671 / R1) protein is Cobalamin import ATP-binding protein BtuD (btuD).